A 71-amino-acid polypeptide reads, in one-letter code: Small ribosomal subunit protein bS21 (71 aa).

Belongs to the bacterial ribosomal protein bS21 family.

The protein is Small ribosomal subunit protein bS21 of Nitrosococcus oceani (strain ATCC 19707 / BCRC 17464 / JCM 30415 / NCIMB 11848 / C-107).